The sequence spans 173 residues: Putative phosphoesterase GWCH70_0799 (173 aa).

H34 serves as the catalytic Proton donor. 2 consecutive short sequence motifs (HXTX) follow at residues 34–37 (HLTL) and 115–118 (HITI). Catalysis depends on H115, which acts as the Proton acceptor.

This sequence belongs to the 2H phosphoesterase superfamily. YjcG family.

The chain is Putative phosphoesterase GWCH70_0799 from Geobacillus sp. (strain WCH70).